The primary structure comprises 118 residues: Small ribosomal subunit protein uS13 (118 aa).

The disordered stretch occupies residues 94–118; sequence GLPVHGQRTKTNARTRKGPAKSITR.

It belongs to the universal ribosomal protein uS13 family. As to quaternary structure, part of the 30S ribosomal subunit. Forms a loose heterodimer with protein S19. Forms two bridges to the 50S subunit in the 70S ribosome.

Functionally, located at the top of the head of the 30S subunit, it contacts several helices of the 16S rRNA. In the 70S ribosome it contacts the 23S rRNA (bridge B1a) and protein L5 of the 50S subunit (bridge B1b), connecting the 2 subunits; these bridges are implicated in subunit movement. Contacts the tRNAs in the A and P-sites. This chain is Small ribosomal subunit protein uS13, found in Acidithiobacillus ferrooxidans (strain ATCC 23270 / DSM 14882 / CIP 104768 / NCIMB 8455) (Ferrobacillus ferrooxidans (strain ATCC 23270)).